The primary structure comprises 896 residues: Alanine--tRNA ligase (896 aa).

Positions 580, 584, 683, and 687 each coordinate Zn(2+).

It belongs to the class-II aminoacyl-tRNA synthetase family. It depends on Zn(2+) as a cofactor.

It is found in the cytoplasm. It catalyses the reaction tRNA(Ala) + L-alanine + ATP = L-alanyl-tRNA(Ala) + AMP + diphosphate. Its function is as follows. Catalyzes the attachment of alanine to tRNA(Ala) in a two-step reaction: alanine is first activated by ATP to form Ala-AMP and then transferred to the acceptor end of tRNA(Ala). Also edits incorrectly charged Ser-tRNA(Ala) and Gly-tRNA(Ala) via its editing domain. In Mycolicibacterium smegmatis (strain ATCC 700084 / mc(2)155) (Mycobacterium smegmatis), this protein is Alanine--tRNA ligase.